The sequence spans 610 residues: Elongation factor 4 (610 aa).

One can recognise a tr-type G domain in the interval 14–196; it reads NRIRNFSIIA…ALVANIPPPK (183 aa). Residues 26–31 and 143–146 each bind GTP; these read DHGKST and NKID.

This sequence belongs to the TRAFAC class translation factor GTPase superfamily. Classic translation factor GTPase family. LepA subfamily.

The protein localises to the cell inner membrane. The catalysed reaction is GTP + H2O = GDP + phosphate + H(+). Its function is as follows. Required for accurate and efficient protein synthesis under certain stress conditions. May act as a fidelity factor of the translation reaction, by catalyzing a one-codon backward translocation of tRNAs on improperly translocated ribosomes. Back-translocation proceeds from a post-translocation (POST) complex to a pre-translocation (PRE) complex, thus giving elongation factor G a second chance to translocate the tRNAs correctly. Binds to ribosomes in a GTP-dependent manner. This chain is Elongation factor 4, found in Legionella pneumophila (strain Lens).